We begin with the raw amino-acid sequence, 210 residues long: Orotate phosphoribosyltransferase (210 aa).

5-phospho-alpha-D-ribose 1-diphosphate is bound by residues R94, K98, H100, and 120 to 128 (EDLISTGGS). S124 contacts orotate.

It belongs to the purine/pyrimidine phosphoribosyltransferase family. PyrE subfamily. As to quaternary structure, homodimer. It depends on Mg(2+) as a cofactor.

It carries out the reaction orotidine 5'-phosphate + diphosphate = orotate + 5-phospho-alpha-D-ribose 1-diphosphate. It functions in the pathway pyrimidine metabolism; UMP biosynthesis via de novo pathway; UMP from orotate: step 1/2. Its function is as follows. Catalyzes the transfer of a ribosyl phosphate group from 5-phosphoribose 1-diphosphate to orotate, leading to the formation of orotidine monophosphate (OMP). This is Orotate phosphoribosyltransferase from Bacillus anthracis (strain A0248).